Reading from the N-terminus, the 907-residue chain is Alanine--tRNA ligase (907 aa).

4 residues coordinate Zn(2+): histidine 602, histidine 606, cysteine 706, and histidine 710.

It belongs to the class-II aminoacyl-tRNA synthetase family. The cofactor is Zn(2+).

The protein localises to the cytoplasm. It carries out the reaction tRNA(Ala) + L-alanine + ATP = L-alanyl-tRNA(Ala) + AMP + diphosphate. In terms of biological role, catalyzes the attachment of alanine to tRNA(Ala) in a two-step reaction: alanine is first activated by ATP to form Ala-AMP and then transferred to the acceptor end of tRNA(Ala). Also edits incorrectly charged Ser-tRNA(Ala) and Gly-tRNA(Ala) via its editing domain. The sequence is that of Alanine--tRNA ligase from Thermofilum pendens (strain DSM 2475 / Hrk 5).